The primary structure comprises 41 residues: Probable cinnamyl alcohol dehydrogenase 2 (41 aa).

This sequence belongs to the zinc-containing alcohol dehydrogenase family. Zn(2+) is required as a cofactor.

The catalysed reaction is (E)-cinnamyl alcohol + NADP(+) = (E)-cinnamaldehyde + NADPH + H(+). It carries out the reaction (E)-coniferol + NADP(+) = (E)-coniferaldehyde + NADPH + H(+). The enzyme catalyses (E)-sinapyl alcohol + NADP(+) = (E)-sinapaldehyde + NADPH + H(+). It catalyses the reaction (E)-4-coumaroyl alcohol + NADP(+) = (E)-4-coumaraldehyde + NADPH + H(+). The catalysed reaction is (E)-caffeyl alcohol + NADP(+) = (E)-caffeyl aldehyde + NADPH + H(+). It participates in aromatic compound metabolism; phenylpropanoid biosynthesis. Involved in lignin biosynthesis. Catalyzes the final step specific for the production of lignin monomers, like coniferyl alcohol, sinapyl alcohol and 4-coumaryl alcohol. The polypeptide is Probable cinnamyl alcohol dehydrogenase 2 (Pseudotsuga menziesii (Douglas-fir)).